The primary structure comprises 796 residues: Cadherin-11 (796 aa).

The N-terminal stretch at 1 to 22 (MKENYCLQAALVCLGMLCHSHA) is a signal peptide. A propeptide spanning residues 23–53 (FAPERRGHLRPSFHGHHEKGKEGQVLQRSKR) is cleaved from the precursor. 5 Cadherin domains span residues 54–159 (GWVW…PPEF), 160–268 (LHET…PPKF), 269–383 (PQSV…PPMF), 384–486 (LAPS…DNAP), and 487–612 (KFAA…YILN). The Extracellular segment spans residues 54–617 (GWVWNQFFVI…AYILNAGLST (564 aa)). N-linked (GlcNAc...) asparagine glycans are attached at residues Asn-455 and Asn-540. The helical transmembrane segment at 618–640 (GALIAILACIVILLVIVVLFVTL) threads the bilayer. Topologically, residues 641-796 (RRQKKEPLIV…GSKDTFDDDS (156 aa)) are cytoplasmic. A Phosphoserine modification is found at Ser-788. Phosphothreonine is present on Thr-791.

In terms of assembly, interacts with PCDH8. Expressed mainly in brain but also found in other tissues. Expressed in neuroblasts. In the embryo from 67 to 72 days of gestation, detected at high levels in facial mesenchyme including the central palatal mesenchyme, dental mesenchyme, the eye and optic muscle, and the tongue (at protein level).

It localises to the cell membrane. Functionally, cadherins are calcium-dependent cell adhesion proteins. They preferentially interact with themselves in a homophilic manner in connecting cells; cadherins may thus contribute to the sorting of heterogeneous cell types. Required for proper focal adhesion assembly. Involved in the regulation of cell migration. This is Cadherin-11 (CDH11) from Homo sapiens (Human).